A 139-amino-acid polypeptide reads, in one-letter code: Transcription antitermination protein NusB (139 aa).

The protein belongs to the NusB family.

In terms of biological role, involved in transcription antitermination. Required for transcription of ribosomal RNA (rRNA) genes. Binds specifically to the boxA antiterminator sequence of the ribosomal RNA (rrn) operons. The chain is Transcription antitermination protein NusB from Klebsiella pneumoniae (strain 342).